The sequence spans 126 residues: Histone H2B type 2-B (126 aa).

Residues 1–12 show a composition bias toward low complexity; that stretch reads MPDPAKSAPAPK. A disordered region spans residues 1-36; it reads MPDPAKSAPAPKKGSKKAVTKVQKKDGKKRKRSRKE. Pro-2 is subject to N-acetylproline. Lys-6 bears the N6-(2-hydroxyisobutyryl)lysine; alternate mark. An N6-(beta-hydroxybutyryl)lysine; alternate modification is found at Lys-6. Lys-6 bears the N6-acetyllysine; alternate mark. At Lys-6 the chain carries N6-butyryllysine; alternate. Lys-6 is modified (N6-crotonyllysine; alternate). Lys-6 is modified (N6-lactoyllysine; alternate). Lys-6 is covalently cross-linked (Glycyl lysine isopeptide (Lys-Gly) (interchain with G-Cter in SUMO2); alternate). Ser-7 is modified (ADP-ribosylserine). Lys-12 bears the N6-(beta-hydroxybutyryl)lysine; alternate mark. N6-acetyllysine; alternate is present on residues Lys-12 and Lys-13. N6-crotonyllysine; alternate is present on residues Lys-12 and Lys-13. Lys-12 is subject to N6-lactoyllysine; alternate. Position 13 is an N6-(2-hydroxyisobutyryl)lysine; alternate (Lys-13). Ser-15 is modified (phosphoserine; by STK4/MST1). Lys-16, Lys-17, Lys-21, and Lys-24 each carry N6-acetyllysine; alternate. N6-crotonyllysine; alternate is present on residues Lys-16, Lys-17, Lys-21, and Lys-24. N6-lactoyllysine; alternate is present on residues Lys-16, Lys-17, Lys-21, and Lys-24. An N6-glutaryllysine; alternate modification is found at Lys-17. Lys-21 and Lys-24 each carry N6-(2-hydroxyisobutyryl)lysine; alternate. The residue at position 21 (Lys-21) is an N6-(beta-hydroxybutyryl)lysine; alternate. At Lys-21 the chain carries N6-butyryllysine; alternate. Residue Lys-21 forms a Glycyl lysine isopeptide (Lys-Gly) (interchain with G-Cter in SUMO2); alternate linkage. Lys-25 carries the post-translational modification N6-(2-hydroxyisobutyryl)lysine. Lys-35 is modified (N6-(2-hydroxyisobutyryl)lysine; alternate). Position 35 is an N6-(beta-hydroxybutyryl)lysine; alternate (Lys-35). Lys-35 is subject to N6-crotonyllysine; alternate. Lys-35 carries the N6-glutaryllysine; alternate modification. Lys-35 is modified (N6-succinyllysine; alternate). Lys-35 participates in a covalent cross-link: Glycyl lysine isopeptide (Lys-Gly) (interchain with G-Cter in ubiquitin); alternate. At Glu-36 the chain carries PolyADP-ribosyl glutamic acid. Ser-37 is subject to Phosphoserine; by AMPK. Residues Lys-44, Lys-47, and Lys-58 each carry the N6-(2-hydroxyisobutyryl)lysine; alternate modification. N6-lactoyllysine; alternate is present on Lys-44. Residues Lys-44 and Lys-47 each carry the N6-glutaryllysine; alternate modification. Residue Lys-47 is modified to N6-methyllysine; alternate. Lys-58 carries the post-translational modification N6,N6-dimethyllysine; alternate. Arg-80 carries the dimethylated arginine modification. Lys-86 carries the N6-(2-hydroxyisobutyryl)lysine; alternate modification. Residue Lys-86 is modified to N6-acetyllysine; alternate. Lys-86 bears the N6-lactoyllysine; alternate mark. Residue Lys-86 is modified to N6,N6,N6-trimethyllysine; alternate. Omega-N-methylarginine is present on residues Arg-87 and Arg-93. The residue at position 109 (Lys-109) is an N6-(2-hydroxyisobutyryl)lysine; alternate. Lys-109 is modified (N6-(beta-hydroxybutyryl)lysine; alternate). At Lys-109 the chain carries N6-lactoyllysine; alternate. Lys-109 is modified (N6-glutaryllysine; alternate). Lys-109 carries the post-translational modification N6-methyllysine; alternate. Ser-113 is a glycosylation site (O-linked (GlcNAc) serine). At Thr-116 the chain carries Phosphothreonine. N6-(2-hydroxyisobutyryl)lysine; alternate occurs at positions 117 and 121. At Lys-117 the chain carries N6-(beta-hydroxybutyryl)lysine; alternate. Residues Lys-117 and Lys-121 each carry the N6-lactoyllysine; alternate modification. An N6-glutaryllysine; alternate mark is found at Lys-117 and Lys-121. N6-succinyllysine; alternate occurs at positions 117 and 121. An N6-methylated lysine; alternate modification is found at Lys-117. Lys-121 is covalently cross-linked (Glycyl lysine isopeptide (Lys-Gly) (interchain with G-Cter in ubiquitin); alternate).

Belongs to the histone H2B family. The nucleosome is a histone octamer containing two molecules each of H2A, H2B, H3 and H4 assembled in one H3-H4 heterotetramer and two H2A-H2B heterodimers. The octamer wraps approximately 147 bp of DNA. In terms of processing, monoubiquitination at Lys-35 (H2BK34Ub) by the MSL1/MSL2 dimer is required for histone H3 'Lys-4' (H3K4me) and 'Lys-79' (H3K79me) methylation and transcription activation at specific gene loci, such as HOXA9 and MEIS1 loci. Similarly, monoubiquitination at Lys-121 (H2BK120Ub) by the RNF20/40 complex gives a specific tag for epigenetic transcriptional activation and is also prerequisite for histone H3 'Lys-4' and 'Lys-79' methylation. It also functions cooperatively with the FACT dimer to stimulate elongation by RNA polymerase II. H2BK120Ub also acts as a regulator of mRNA splicing: deubiquitination by USP49 is required for efficient cotranscriptional splicing of a large set of exons. Post-translationally, phosphorylated on Ser-15 (H2BS14ph) by STK4/MST1 during apoptosis; which facilitates apoptotic chromatin condensation. Also phosphorylated on Ser-15 in response to DNA double strand breaks (DSBs), and in correlation with somatic hypermutation and immunoglobulin class-switch recombination. Phosphorylation at Ser-37 (H2BS36ph) by AMPK in response to stress promotes transcription. GlcNAcylation at Ser-113 promotes monoubiquitination of Lys-121. It fluctuates in response to extracellular glucose, and associates with transcribed genes. In terms of processing, ADP-ribosylated by PARP1 or PARP2 on Ser-7 (H2BS6ADPr) in response to DNA damage. H2BS6ADPr promotes recruitment of CHD1L. Poly ADP-ribosylation on Glu-36 (H2BE35ADPr) by PARP1 regulates adipogenesis: it inhibits phosphorylation at Ser-37 (H2BS36ph), thereby blocking expression of pro-adipogenetic genes. Post-translationally, crotonylation (Kcr) is specifically present in male germ cells and marks testis-specific genes in post-meiotic cells, including X-linked genes that escape sex chromosome inactivation in haploid cells. Crotonylation marks active promoters and enhancers and confers resistance to transcriptional repressors. It is also associated with post-meiotically activated genes on autosomes. Hydroxybutyrylation of histones is induced by starvation. In terms of processing, lactylated in macrophages by EP300/P300 by using lactoyl-CoA directly derived from endogenous or exogenous lactate, leading to stimulates gene transcription.

The protein localises to the nucleus. The protein resides in the chromosome. Its function is as follows. Core component of nucleosome. Nucleosomes wrap and compact DNA into chromatin, limiting DNA accessibility to the cellular machineries which require DNA as a template. Histones thereby play a central role in transcription regulation, DNA repair, DNA replication and chromosomal stability. DNA accessibility is regulated via a complex set of post-translational modifications of histones, also called histone code, and nucleosome remodeling. This chain is Histone H2B type 2-B, found in Mus musculus (Mouse).